A 317-amino-acid polypeptide reads, in one-letter code: Small ribosomal subunit protein uS2 (317 aa).

The segment at 277-317 is disordered; the sequence is SDWTAPAANPANAAAAGAPAPAPAAATTTESWGGSGAENWG. Positions 281–302 are enriched in low complexity; it reads APAANPANAAAAGAPAPAPAAA.

This sequence belongs to the universal ribosomal protein uS2 family. Component of the small ribosomal subunit. Mature ribosomes consist of a small (40S) and a large (60S) subunit. The 40S subunit contains about 33 different proteins and 1 molecule of RNA (18S). The 60S subunit contains about 49 different proteins and 3 molecules of RNA (28S, 5.8S and 5S). Interacts with ribosomal protein S21.

Its subcellular location is the cytoplasm. Required for the assembly and/or stability of the 40S ribosomal subunit. Required for the processing of the 20S rRNA-precursor to mature 18S rRNA in a late step of the maturation of 40S ribosomal subunits. The polypeptide is Small ribosomal subunit protein uS2 (Urechis caupo (Innkeeper worm)).